The chain runs to 618 residues: Membrane protein insertase YidC (618 aa).

A run of 6 helical transmembrane segments spans residues 3 to 23 (KNTI…SFLS), 363 to 383 (WGLS…IVVF), 439 to 459 (LPML…PSAI), 478 to 498 (FITF…FCLL), 520 to 540 (PQMA…LFVL), and 545 to 565 (SGLN…MIIL).

Belongs to the OXA1/ALB3/YidC family. Type 1 subfamily. Interacts with the Sec translocase complex via SecD. Specifically interacts with transmembrane segments of nascent integral membrane proteins during membrane integration.

It is found in the cell inner membrane. Functionally, required for the insertion and/or proper folding and/or complex formation of integral membrane proteins into the membrane. Involved in integration of membrane proteins that insert both dependently and independently of the Sec translocase complex, as well as at least some lipoproteins. Aids folding of multispanning membrane proteins. This is Membrane protein insertase YidC from Bacteroides fragilis (strain ATCC 25285 / DSM 2151 / CCUG 4856 / JCM 11019 / LMG 10263 / NCTC 9343 / Onslow / VPI 2553 / EN-2).